We begin with the raw amino-acid sequence, 438 residues long: RNA polymerase sigma factor SigA (438 aa).

The span at 1–11 (MKKSKSKKKAA) shows a compositional bias: basic residues. The segment at 1 to 69 (MKKSKSKKKA…PLDLEGPLEA (69 aa)) is disordered. Over residues 12–26 (KAQEVEVKEPVKEPE) the composition is skewed to basic and acidic residues. 2 stretches are compositionally biased toward acidic residues: residues 27–45 (PLPELEAAEDLQDLPEPDP) and 52–69 (PELEDLADPLDLEGPLEA). Residues 93 to 128 (SDPVRQYLHEIGQVPLLTLEEEIDLARKVEEGMEAI) form a sigma-70 factor domain-1 region. The sigma-70 factor domain-2 stretch occupies residues 202–272 (LIEANLRLVV…NRAIADQART (71 aa)). Residues 226-229 (DLIQ) carry the Interaction with polymerase core subunit RpoC motif. The segment at 281-359 (ETINKLSRTA…DENLPSPVEA (79 aa)) is sigma-70 factor domain-3. The interval 372–424 (ALSKLSEREAMVLKLRKGLIDGREHTLEEVGAYFGVTRERIRQIENKALRKLK) is sigma-70 factor domain-4. Residues 398–417 (LEEVGAYFGVTRERIRQIEN) constitute a DNA-binding region (H-T-H motif).

Belongs to the sigma-70 factor family. RpoD/SigA subfamily. Interacts transiently with the RNA polymerase catalytic core formed by RpoA, RpoB, RpoC and RpoZ (2 alpha, 1 beta, 1 beta' and 1 omega subunit) to form the RNA polymerase holoenzyme that can initiate transcription.

The protein localises to the cytoplasm. Its function is as follows. Sigma factors are initiation factors that promote the attachment of RNA polymerase to specific initiation sites and are then released. This sigma factor is the primary sigma factor during exponential growth. The chain is RNA polymerase sigma factor SigA from Thermus aquaticus.